The primary structure comprises 455 residues: Oxidative stress induced growth inhibitor homolog osgn-1 (455 aa).

The protein belongs to the OKL38 family. Requires NADPH as cofactor.

The protein localises to the midbody. Functionally, monooxygenase catalytic activity. Involved in regulation of cytokinesis; promotes rho-1/RhoA activity, probably acting locally at the midbody in late cytokinesis. Monooxygenase activity is required to stabilize structures between primordial germ cells (PGCs), termed intercellular bridges. Dispensable for fertility. In Caenorhabditis elegans, this protein is Oxidative stress induced growth inhibitor homolog osgn-1.